The primary structure comprises 248 residues: Protein-lysine N-methyltransferase EFM5 (248 aa).

The protein belongs to the class I-like SAM-binding methyltransferase superfamily. EFM5 family.

The protein localises to the cytoplasm. S-adenosyl-L-methionine-dependent protein-lysine N-methyltransferase that trimethylates elongation factor 1-alpha (TEF1 and TEF2) at 'Lys-79'. Required for replication of Brome mosaic virus (BMV). This chain is Protein-lysine N-methyltransferase EFM5, found in Saccharomyces cerevisiae (strain ATCC 204508 / S288c) (Baker's yeast).